Here is a 329-residue protein sequence, read N- to C-terminus: Probable quinone oxidoreductase (329 aa).

A Phosphoserine modification is found at Ser-191.

Belongs to the zinc-containing alcohol dehydrogenase family. Quinone oxidoreductase subfamily.

It localises to the cytoplasm. Its subcellular location is the nucleus. It carries out the reaction 2 a quinone + NADPH + H(+) = 2 a 1,4-benzosemiquinone + NADP(+). This chain is Probable quinone oxidoreductase (zta1), found in Schizosaccharomyces pombe (strain 972 / ATCC 24843) (Fission yeast).